The following is a 211-amino-acid chain: Peptidyl-tRNA hydrolase (211 aa).

Position 15 (Tyr-15) interacts with tRNA. Catalysis depends on His-20, which acts as the Proton acceptor. TRNA is bound by residues Phe-66, Asn-68, and Asn-114. The interval 189–211 (TKPPRPKATRPAQAQAAPQAGAD) is disordered. Low complexity predominate over residues 197-211 (TRPAQAQAAPQAGAD).

It belongs to the PTH family. Monomer.

The protein localises to the cytoplasm. It carries out the reaction an N-acyl-L-alpha-aminoacyl-tRNA + H2O = an N-acyl-L-amino acid + a tRNA + H(+). Hydrolyzes ribosome-free peptidyl-tRNAs (with 1 or more amino acids incorporated), which drop off the ribosome during protein synthesis, or as a result of ribosome stalling. In terms of biological role, catalyzes the release of premature peptidyl moieties from peptidyl-tRNA molecules trapped in stalled 50S ribosomal subunits, and thus maintains levels of free tRNAs and 50S ribosomes. This chain is Peptidyl-tRNA hydrolase, found in Acidovorax ebreus (strain TPSY) (Diaphorobacter sp. (strain TPSY)).